We begin with the raw amino-acid sequence, 385 residues long: 1-deoxy-D-xylulose 5-phosphate reductoisomerase (385 aa).

Positions 10, 11, 12, 13, 36, 38, and 121 each coordinate NADPH. Lysine 122 serves as a coordination point for 1-deoxy-D-xylulose 5-phosphate. Glutamate 123 contributes to the NADPH binding site. Aspartate 147 contributes to the Mn(2+) binding site. Positions 148, 149, 173, and 196 each coordinate 1-deoxy-D-xylulose 5-phosphate. Glutamate 149 is a Mn(2+) binding site. NADPH is bound at residue glycine 202. Residues serine 209, asparagine 214, lysine 215, and glutamate 218 each contribute to the 1-deoxy-D-xylulose 5-phosphate site. Glutamate 218 is a binding site for Mn(2+).

The protein belongs to the DXR family. Mg(2+) is required as a cofactor. The cofactor is Mn(2+).

It carries out the reaction 2-C-methyl-D-erythritol 4-phosphate + NADP(+) = 1-deoxy-D-xylulose 5-phosphate + NADPH + H(+). It functions in the pathway isoprenoid biosynthesis; isopentenyl diphosphate biosynthesis via DXP pathway; isopentenyl diphosphate from 1-deoxy-D-xylulose 5-phosphate: step 1/6. Its function is as follows. Catalyzes the NADPH-dependent rearrangement and reduction of 1-deoxy-D-xylulose-5-phosphate (DXP) to 2-C-methyl-D-erythritol 4-phosphate (MEP). The sequence is that of 1-deoxy-D-xylulose 5-phosphate reductoisomerase from Exiguobacterium sp. (strain ATCC BAA-1283 / AT1b).